Here is a 1309-residue protein sequence, read N- to C-terminus: MSSTCSSPSAVEDPELGFRIDLDWTAGDSEDQVALRLESQLMVALPAPHDTVVVELKGIGDDDEGGLENVGLEMRVEKRREPLRAVTLMKAVGSGQQYDGVGVLTRLMRSDMMPAAIPAPAIDVASSCGVHWKTVTSLSLSGCGLLVMPVEVTELPLLEKLCLEHNKLSVLPPEIGKLKNLKILRVDNNMLISVPVELRQCVGLVELSLEHNKLVRPLLDFRAMAGLRILRLFGNPLEFLPEILPLHQLRHLSLVNIRIVSDENLRSVNVQIETENTSYFGASRHKLSAFSPLIFRSSSCHHPLLASTLVKIMQDEGNRSVIGKDENAVRQLISMITSDNQHVVEQACVALSSLARDVGVAMQLMKCDIMKPTETVLKSSSPDEVISVLQVVVTLAFVSDSVSQKMLTKDMLKALKSLCAHKNPEVQRQALLAVGNLAFCLENRRILITSESLRELLMRLIVTPEPRVNKAAARALAILGENEILRRSIKGRQVPKQGLRILTMDGGGMKGLATVQILKEIEKGSGKPIHELFDLICGTSTGGMLAIALGVKLMTLEQCEEIYKNLGKLVFAESVPKDNEAASWREKLDQLYKSSSQSFRVVIHGSKHSANEFERLLKEMCADEDGDLLIESAVKNVPKVFVVSTLVSVMPAQPFIFRNYQYPVGTPEMSYAFSDHSGGSTLTSSTASDQAGYYKQSAFMGSCKHQVWQAIRASSAAPYYLDDFSVDSYRWQDGAIVANNPTIFAIREAQLLWPDTKIDCLVSIGSGSVPTRVRKGGWRYLDTGQVLIESACSVERVEEALSTLLPMLPEIQYFRFNPVDDRCGMELDETDPAIWLKLEAAIEEFIQSNPQVFKNVCERLTLPFLNDEKWCDNLKPRFMNGKLPNSRVESSPSLGWRRNVLLMEAQHSPDSGRVKYHARALESFCSNNGIKLSSLHTTATPGCQKPSPGTAFPTPFTSPLITGSLPPSPLLFTPELGPQKFNRIDMVPPLSLDGGHVGKTVMSPPSSPPRQRQLYLPLRQMHEKLQNLPQVGILHLSLQNDSNGSILSWQNDVFVVAEPGDLADKFLQSVKVSILSVMQSNRRKAASVLSNICSISDLVRSKKCFQVGNIIHRYIGRQTLVMEDDQEIASFMFRRTVPSAHLTPDDIRWMVGAWRDRIIVFSGTFGPTQAVVKAFLDSGAKAVIGPSNEPQETPLITSQGSSEYNIGDQNGKFEIGEEEDEDEEVNEETEREEMEPPTPTSDWEDSDHEKTNRDGKYCGLWEDDEEEVSEFVCQLYDQLFRENSRVDVALQKALASHRKLRYTCHLPNV.

LRR repeat units follow at residues 155–178 (LPLL…IGKL), 180–201 (NLKI…LRQC), 203–223 (GLVE…DFRA), and 224–248 (MAGL…PLHQ). ARM repeat units follow at residues 315–356 (DEGN…SLAR), 401–439 (SVSQ…NLAF), and 440–481 (CLEN…ILGE). Residues 502-746 (LTMDGGGMKG…VANNPTIFAI (245 aa)) enclose the PNPLA domain. Positions 506–511 (GGGMKG) match the GXGXXG motif. The GXSXG signature appears at 538-542 (GTSTG). Ser540 (nucleophile) is an active-site residue. Asp733 serves as the catalytic Proton acceptor. The DGA/G motif lies at 733 to 735 (DGA). A disordered region spans residues 1183-1253 (VIGPSNEPQE…EDSDHEKTNR (71 aa)). Residues 1188 to 1208 (NEPQETPLITSQGSSEYNIGD) are compositionally biased toward polar residues. Positions 1216–1235 (GEEEDEDEEVNEETEREEME) are enriched in acidic residues.

The protein belongs to the patatin family.

The protein localises to the plastid. Its subcellular location is the chloroplast. Its function is as follows. Possesses non-specific lipolytic acyl hydrolase (LAH) activity. Catalyzes the hydrolysis of the galactolipids monogalactosyldiacylglycerol (MGDG) and digalactosyldiacylglycerol (DGDG), and less efficiently the phoshpolipids phosphatidylcholine (PC), phosphatidylethanolamine (PE), phosphatidylglycerol (PG), phosphatidylserine (PS) and phosphatidylinositol (PI). Hydrolyzes phospholipids at both the sn-1 and sn-2 positions. Involved in basal jasmonic acid production and promotes resistance to the necrotrophic fungal pathogen Botrytis cinerea. The protein is Phospholipase A I (PLA1) of Arabidopsis thaliana (Mouse-ear cress).